Here is a 1195-residue protein sequence, read N- to C-terminus: Voltage-gated inwardly rectifying potassium channel KCNH7 (1195 aa).

At 1 to 412 the chain is on the cytoplasmic side; the sequence is MPVRRGHVAP…YSPFKAVWDW (412 aa). Positions 41–70 constitute a PAS domain; that stretch reads IIYCNDGFCEMTGFSRPDVMQKPCTCDFLH. Residues 92 to 144 enclose the PAC domain; the sequence is RKVEVTYYHKNGSTFICNTHIIPVKNQEGVAMMFIINFEYVTDEENAATPERV. A Phosphoserine modification is found at Ser174. The interval 194–216 is disordered; it reads SVAMKHFKSPTKESCSPSEADDT. 2 positions are modified to phosphoserine: Ser238 and Ser319. A helical membrane pass occupies residues 413 to 433; that stretch reads LILLLVIYTAIFTPYSAAFLL. Residues 434-449 are Extracellular-facing; it reads NDREEQKRRECGYSCS. A helical transmembrane segment spans residues 450-470; it reads PLNVVDLIVDIMFIIDILINF. Residues 471–494 are Cytoplasmic-facing; sequence RTTYVNQNEEVVSDPAKIAIHYFK. A helical membrane pass occupies residues 495–515; it reads GWFLIDMVAAIPFDLLIFGSG. The Extracellular segment spans residues 516–521; it reads SDETTT. Residues 522–542 traverse the membrane as a helical; Voltage-sensor segment; it reads LIGLLKTARLLRLVRVARKLD. The Cytoplasmic portion of the chain corresponds to 543–549; it reads RYSEYGA. The helical transmembrane segment at 550-570 threads the bilayer; the sequence is AVLMLLMCIFALIAHWLACIW. At 571–614 the chain is on the extracellular side; it reads YAIGNVERPYLTDKIGWLDSLGTQIGKRYNDSDSSSGPSIKDKY. Asn600 is a glycosylation site (N-linked (GlcNAc...) asparagine). Positions 615-635 form an intramembrane region, pore-forming; it reads VTALYFTFSSLTSVGFGNVSP. The Selectivity filter motif lies at 627–632; the sequence is SVGFGN. At 636-641 the chain is on the extracellular side; that stretch reads NTNSEK. Residues 642–662 form a helical membrane-spanning segment; sequence IFSICVMLIGSLMYASIFGNV. The Cytoplasmic portion of the chain corresponds to 663-1195; sequence SAIIQRLYSG…HVSDPGLPGK (533 aa). A cNMP-binding domain region spans residues 745-845; it reads AFRGASKGCL…IQREDLLEVL (101 aa). The segment at 870-915 is disordered; it reads AKSQSVNDSEGDTGKLRRRRLSFESEGEKDFSKENSANDADDSTDT. Residues 890-902 show a composition bias toward basic and acidic residues; it reads LSFESEGEKDFSK. Phosphoserine is present on residues Ser891 and Ser894. Positions 1027–1054 form a coiled coil; sequence YGEVEQRLDLLQEQLNRLESQMTTDIQA.

This sequence belongs to the potassium channel family. H (Eag) (TC 1.A.1.20) subfamily. Kv11.3/KCNH7 sub-subfamily. As to quaternary structure, the potassium channel is probably composed of a homo- or heterotetrameric complex of pore-forming alpha subunits that can associate only within their subfamily.

The protein localises to the cell membrane. It carries out the reaction K(+)(in) = K(+)(out). Functionally, pore-forming (alpha) subunit of voltage-gated inwardly rectifying potassium channel. Exhibits faster activation and deactivation kinetics and slow inactivation at membrane potentials positive to 240 mV, resulting in the weakest inward rectification. This Mus musculus (Mouse) protein is Voltage-gated inwardly rectifying potassium channel KCNH7.